A 112-amino-acid chain; its full sequence is MGYTIQLDKDGDYCWDEDPTHHDPYTQANATSHTAVSRAAMAAPHAAAHHAFHEPFIKLNLTDKNIFNGLGFILIVIFIYLLLITLQQMLTRHIYNTVQHCVKAHLDSKNLQ.

2 N-linked (GlcNAc...) asparagine; by host glycosylation sites follow: asparagine 29 and asparagine 60. The chain crosses the membrane as a helical span at residues 66-86; that stretch reads IFNGLGFILIVIFIYLLLITL.

This sequence belongs to the asfivirus B117L family.

It localises to the host membrane. The protein resides in the virion. This is an uncharacterized protein from African swine fever virus (isolate Tick/South Africa/Pretoriuskop Pr4/1996) (ASFV).